Consider the following 475-residue polypeptide: Trigger factor (475 aa).

The PPIase FKBP-type domain occupies 165–250 (GDRVTIDYLG…VKAVFRPDEL (86 aa)). Residues 439 to 466 (EYDETDVPEEKPAKKKSAVKEKSAEKTS) show a composition bias toward basic and acidic residues. Residues 439–475 (EYDETDVPEEKPAKKKSAVKEKSAEKTSAKKKAPKKA) form a disordered region.

This sequence belongs to the FKBP-type PPIase family. Tig subfamily.

It localises to the cytoplasm. The enzyme catalyses [protein]-peptidylproline (omega=180) = [protein]-peptidylproline (omega=0). Functionally, involved in protein export. Acts as a chaperone by maintaining the newly synthesized protein in an open conformation. Functions as a peptidyl-prolyl cis-trans isomerase. This chain is Trigger factor, found in Bartonella tribocorum (strain CIP 105476 / IBS 506).